The sequence spans 186 residues: Guanylate kinase (186 aa).

Positions 4-182 constitute a Guanylate kinase-like domain; the sequence is GKLIVLTGPS…TLQNLDKILF (179 aa). 11–18 serves as a coordination point for ATP; sequence GPSGVGKG.

Belongs to the guanylate kinase family.

The protein localises to the cytoplasm. The catalysed reaction is GMP + ATP = GDP + ADP. Its function is as follows. Essential for recycling GMP and indirectly, cGMP. The sequence is that of Guanylate kinase from Trichodesmium erythraeum (strain IMS101).